Here is a 588-residue protein sequence, read N- to C-terminus: Succinate dehydrogenase flavoprotein subunit (588 aa).

FAD contacts are provided by residues 14-19 (GAGGAG), 37-52 (SKVF…AQGG), and Asp-221. A Tele-8alpha-FAD histidine modification is found at His-45. Substrate contacts are provided by His-242 and Thr-254. Residue Arg-286 is the Proton acceptor of the active site. Residue His-354 participates in substrate binding. Glu-388 is an FAD binding site. Arg-399 lines the substrate pocket. 404–405 (SL) contacts FAD.

Belongs to the FAD-dependent oxidoreductase 2 family. FRD/SDH subfamily. In terms of assembly, part of an enzyme complex containing four subunits: a flavoprotein, an iron-sulfur, cytochrome b-556, and a hydrophobic anchor protein. FAD is required as a cofactor.

It is found in the cell inner membrane. It catalyses the reaction a quinone + succinate = fumarate + a quinol. The protein operates within carbohydrate metabolism; tricarboxylic acid cycle; fumarate from succinate (bacterial route): step 1/1. In terms of biological role, two distinct, membrane-bound, FAD-containing enzymes are responsible for the catalysis of fumarate and succinate interconversion; the fumarate reductase is used in anaerobic growth, and the succinate dehydrogenase is used in aerobic growth. In Salmonella typhimurium (strain LT2 / SGSC1412 / ATCC 700720), this protein is Succinate dehydrogenase flavoprotein subunit (sdhA).